The chain runs to 270 residues: Putative phosphoenolpyruvate synthase regulatory protein (270 aa).

An ADP-binding site is contributed by 150 to 157 (GVSRCGKT).

This sequence belongs to the pyruvate, phosphate/water dikinase regulatory protein family. PSRP subfamily.

The enzyme catalyses [pyruvate, water dikinase] + ADP = [pyruvate, water dikinase]-phosphate + AMP + H(+). The catalysed reaction is [pyruvate, water dikinase]-phosphate + phosphate + H(+) = [pyruvate, water dikinase] + diphosphate. Bifunctional serine/threonine kinase and phosphorylase involved in the regulation of the phosphoenolpyruvate synthase (PEPS) by catalyzing its phosphorylation/dephosphorylation. This Aeromonas hydrophila subsp. hydrophila (strain ATCC 7966 / DSM 30187 / BCRC 13018 / CCUG 14551 / JCM 1027 / KCTC 2358 / NCIMB 9240 / NCTC 8049) protein is Putative phosphoenolpyruvate synthase regulatory protein.